The following is a 366-amino-acid chain: Chorismate synthase (366 aa).

Residues Arg-48 and Arg-54 each coordinate NADP(+). FMN is bound by residues Arg-125–Ser-127, Asn-238–Ala-239, Gly-278, Lys-293–Ser-297, and Arg-319.

It belongs to the chorismate synthase family. As to quaternary structure, homotetramer. Requires FMNH2 as cofactor.

It carries out the reaction 5-O-(1-carboxyvinyl)-3-phosphoshikimate = chorismate + phosphate. The protein operates within metabolic intermediate biosynthesis; chorismate biosynthesis; chorismate from D-erythrose 4-phosphate and phosphoenolpyruvate: step 7/7. Catalyzes the anti-1,4-elimination of the C-3 phosphate and the C-6 proR hydrogen from 5-enolpyruvylshikimate-3-phosphate (EPSP) to yield chorismate, which is the branch point compound that serves as the starting substrate for the three terminal pathways of aromatic amino acid biosynthesis. This reaction introduces a second double bond into the aromatic ring system. The polypeptide is Chorismate synthase (Burkholderia ambifaria (strain ATCC BAA-244 / DSM 16087 / CCUG 44356 / LMG 19182 / AMMD) (Burkholderia cepacia (strain AMMD))).